Reading from the N-terminus, the 335-residue chain is Tetraacyldisaccharide 4'-kinase (335 aa).

An ATP-binding site is contributed by 58-65; sequence TVGGSGKT.

Belongs to the LpxK family.

It carries out the reaction a lipid A disaccharide + ATP = a lipid IVA + ADP + H(+). Its pathway is glycolipid biosynthesis; lipid IV(A) biosynthesis; lipid IV(A) from (3R)-3-hydroxytetradecanoyl-[acyl-carrier-protein] and UDP-N-acetyl-alpha-D-glucosamine: step 6/6. In terms of biological role, transfers the gamma-phosphate of ATP to the 4'-position of a tetraacyldisaccharide 1-phosphate intermediate (termed DS-1-P) to form tetraacyldisaccharide 1,4'-bis-phosphate (lipid IVA). This Shewanella sp. (strain MR-7) protein is Tetraacyldisaccharide 4'-kinase.